Here is a 701-residue protein sequence, read N- to C-terminus: Peptide transporter CstA (701 aa).

Residues 1–6 (MNKSGK) are Cytoplasmic-facing. Residues 7 to 27 (YLVWTVLSVMGAFALGYIALN) traverse the membrane as a helical segment. Residues 28-33 (RGEQIN) lie on the Periplasmic side of the membrane. The helical transmembrane segment at 34 to 54 (ALWIVVASVCIYLIAYRFYGL) threads the bilayer. Topologically, residues 55–86 (YIAKNVLAVDPTRMTPAVRHNDGLDYVPTDKK) are cytoplasmic. A helical transmembrane segment spans residues 87-107 (VLFGHHFAAIAGAGPLVGPVL). The Periplasmic segment spans residues 108-117 (AAQMGYLPGM). A helical transmembrane segment spans residues 118-138 (IWLLAGVVLAGAVQDFMVLFV). At 139 to 160 (STRRDGRSLGELVKEEMGPTAG) the chain is on the cytoplasmic side. Residues 161-181 (VIALVACFMIMVIILAVLAMI) form a helical membrane-spanning segment. Residues 182 to 189 (VVKALTHS) are Periplasmic-facing. A helical membrane pass occupies residues 190-210 (PWGTYTVAFTIPLALFMGIYL). The Cytoplasmic segment spans residues 211–217 (RYLRPGR). Residues 218–238 (IGEVSVIGLVFLIFAIISGGW) form a helical membrane-spanning segment. The Periplasmic portion of the chain corresponds to 239–255 (VAESPTWAPYFDFTGVQ). The helical transmembrane segment at 256–276 (LTWMLVGYGFVAAVLPVWLLL) threads the bilayer. The Cytoplasmic segment spans residues 277 to 280 (APRD). Residues 281 to 301 (YLSTFLKIGTIVGLAVGILIM) form a helical membrane-spanning segment. The Periplasmic segment spans residues 302 to 324 (RPTLTMPALTKFVDGTGPVWTGN). Residues 325–345 (LFPFLFITIACGAVSGFHALI) form a helical membrane-spanning segment. The Cytoplasmic segment spans residues 346–372 (SSGTTPKMLANEGQACFIGYGGMLMES). A helical membrane pass occupies residues 373–393 (FVAIMALVSACIIDPGVYFAM). The Periplasmic portion of the chain corresponds to 394–395 (NS). A helical membrane pass occupies residues 396-416 (PMAVLAPAGTADVVASAAQVV). Topologically, residues 417 to 439 (SSWGFSITPDTLNQIASEVGEQS) are cytoplasmic. A helical transmembrane segment spans residues 440 to 460 (IISRAGGAPTLAVGMAYILHG). Residues 461 to 463 (ALG) are Periplasmic-facing. The chain crosses the membrane as a helical span at residues 464-484 (GMMDVAFWYHFAILFEALFIL). Residues 485-523 (TAVDAGTRAARFMLQDLLGVVSPGLKRTDSLPANLLATA) are Cytoplasmic-facing. Residues 524-544 (LCVLAWGYFLHQGVVDPLGGI) form a helical membrane-spanning segment. Residues 545–550 (NTLWPL) are Periplasmic-facing. A helical transmembrane segment spans residues 551–571 (FGIANQMLAGMALMLCAVVLF). The Cytoplasmic portion of the chain corresponds to 572 to 577 (KMKRQR). The helical transmembrane segment at 578–598 (YAWVALVPTAWLLICTLTAGW) threads the bilayer. The Periplasmic segment spans residues 599 to 643 (QKAFSPDAKVGFLAIANKFQAMIDSGNIPSQYTESQLAQLVFNNR). A helical membrane pass occupies residues 644–664 (LDAGLTIFFMVVVVVLALFSI). Residues 665-701 (KTALAALKDPKPTAKETPYEPMPENVEEIVAQAKGAH) are Cytoplasmic-facing.

The protein belongs to the peptide transporter carbon starvation (CstA) (TC 2.A.114) family.

The protein localises to the cell inner membrane. Its function is as follows. Involved in peptide utilization during carbon starvation. In Escherichia coli (strain K12), this protein is Peptide transporter CstA.